Consider the following 559-residue polypeptide: Formate--tetrahydrofolate ligase (559 aa).

68 to 75 (TPAGEGKT) contributes to the ATP binding site.

It belongs to the formate--tetrahydrofolate ligase family.

The catalysed reaction is (6S)-5,6,7,8-tetrahydrofolate + formate + ATP = (6R)-10-formyltetrahydrofolate + ADP + phosphate. It participates in one-carbon metabolism; tetrahydrofolate interconversion. This is Formate--tetrahydrofolate ligase from Sinorhizobium fredii (strain NBRC 101917 / NGR234).